The primary structure comprises 165 residues: V-type proton ATPase subunit c2 (165 aa).

Topologically, residues M1–P12 are lumenal. The chain crosses the membrane as a helical span at residues F13 to G33. The Cytoplasmic segment spans residues T34 to S55. Residues I56 to I76 traverse the membrane as a helical segment. Over S77–H95 the chain is Lumenal. Residues L96–G117 form a helical membrane-spanning segment. The Cytoplasmic segment spans residues D118 to K129. Residues L130–L155 traverse the membrane as a helical segment. Residues S156 to E165 are Lumenal-facing.

The protein belongs to the V-ATPase proteolipid subunit family. As to quaternary structure, V-ATPase is a heteromultimeric enzyme composed of a peripheral catalytic V1 complex (components A to H) attached to an integral membrane V0 proton pore complex (components: a, c, c'', d and e). The proteolipid components c and c'' are present as a hexameric ring that forms the proton-conducting pore. Expressed in leaf, root, flower and silique, with lower expression in roots.

It is found in the vacuole membrane. Its function is as follows. Proton-conducting pore forming subunit of the membrane integral V0 complex of vacuolar ATPase. V-ATPase is responsible for acidifying a variety of intracellular compartments in eukaryotic cells. This is V-type proton ATPase subunit c2 (VHA-c2) from Arabidopsis thaliana (Mouse-ear cress).